The sequence spans 307 residues: Elongation factor Ts (307 aa).

The tract at residues 80–83 (TDFV) is involved in Mg(2+) ion dislocation from EF-Tu.

Belongs to the EF-Ts family.

The protein resides in the cytoplasm. Functionally, associates with the EF-Tu.GDP complex and induces the exchange of GDP to GTP. It remains bound to the aminoacyl-tRNA.EF-Tu.GTP complex up to the GTP hydrolysis stage on the ribosome. The sequence is that of Elongation factor Ts from Bradyrhizobium diazoefficiens (strain JCM 10833 / BCRC 13528 / IAM 13628 / NBRC 14792 / USDA 110).